The chain runs to 443 residues: Thymidine phosphorylase (443 aa).

It belongs to the thymidine/pyrimidine-nucleoside phosphorylase family. Homodimer.

The enzyme catalyses thymidine + phosphate = 2-deoxy-alpha-D-ribose 1-phosphate + thymine. Its pathway is pyrimidine metabolism; dTMP biosynthesis via salvage pathway; dTMP from thymine: step 1/2. In terms of biological role, the enzymes which catalyze the reversible phosphorolysis of pyrimidine nucleosides are involved in the degradation of these compounds and in their utilization as carbon and energy sources, or in the rescue of pyrimidine bases for nucleotide synthesis. The chain is Thymidine phosphorylase from Shewanella baltica (strain OS155 / ATCC BAA-1091).